A 1160-amino-acid polypeptide reads, in one-letter code: Transcription factor tau 138 kDa subunit (1160 aa).

The tract at residues 475–533 is disordered; sequence PNSKKTPNKNKRKRQVKNSTNASVAGNISNPKRIKLEQHVSTAQEPKSAEDSPSSNGGT. Residues 480–490 are compositionally biased toward basic residues; the sequence is TPNKNKRKRQV. 2 stretches are compositionally biased toward polar residues: residues 491 to 504 and 513 to 529; these read KNST…NISN and HVST…SPSS. Serine 546 is subject to Phosphoserine.

In terms of assembly, component of the TFIIIC complex composed of TFC1, TFC3, TFC4, TFC6, TFC7 and TFC8. The subunits are organized in two globular domains, tauA and tauB, connected by a proteolysis-sensitive and flexible linker. Interacts with TFC1, TFC4 and TFC6.

The protein localises to the nucleus. It localises to the mitochondrion. Its function is as follows. TFIIIC mediates tRNA and 5S RNA gene activation by binding to intragenic promoter elements. Upstream of the transcription start site, TFIIIC assembles the initiation complex TFIIIB-TFIIIC-tDNA, which is sufficient for RNA polymerase III recruitment and function. Part of the tauB domain of TFIIIC that binds boxB DNA promoter sites of tRNA and similar genes. TFC3 is essential for cell viability. Cooperates with TFC6 in DNA binding. The protein is Transcription factor tau 138 kDa subunit (TFC3) of Saccharomyces cerevisiae (strain ATCC 204508 / S288c) (Baker's yeast).